Reading from the N-terminus, the 198-residue chain is Glycerol-3-phosphate acyltransferase (198 aa).

5 helical membrane-spanning segments follow: residues 6-26, 56-78, 83-101, 113-133, and 155-175; these read FLPV…GLVL, LAAG…AGYI, AAMA…PVWL, IGIL…LWLA, and FLWW…TLLL.

The protein belongs to the PlsY family. In terms of assembly, probably interacts with PlsX.

The protein resides in the cell inner membrane. It catalyses the reaction an acyl phosphate + sn-glycerol 3-phosphate = a 1-acyl-sn-glycero-3-phosphate + phosphate. It functions in the pathway lipid metabolism; phospholipid metabolism. In terms of biological role, catalyzes the transfer of an acyl group from acyl-phosphate (acyl-PO(4)) to glycerol-3-phosphate (G3P) to form lysophosphatidic acid (LPA). This enzyme utilizes acyl-phosphate as fatty acyl donor, but not acyl-CoA or acyl-ACP. In Bradyrhizobium diazoefficiens (strain JCM 10833 / BCRC 13528 / IAM 13628 / NBRC 14792 / USDA 110), this protein is Glycerol-3-phosphate acyltransferase.